The sequence spans 318 residues: Ribose-phosphate pyrophosphokinase (318 aa).

ATP contacts are provided by residues 43–45 (DGE) and 102–103 (RQ). Residues His-136 and Asp-176 each coordinate Mg(2+). Residue Lys-199 is part of the active site. Residues Arg-201, Asp-225, and 229–233 (DTAGT) each bind D-ribose 5-phosphate.

It belongs to the ribose-phosphate pyrophosphokinase family. Class I subfamily. In terms of assembly, homohexamer. Mg(2+) serves as cofactor.

The protein resides in the cytoplasm. The enzyme catalyses D-ribose 5-phosphate + ATP = 5-phospho-alpha-D-ribose 1-diphosphate + AMP + H(+). It functions in the pathway metabolic intermediate biosynthesis; 5-phospho-alpha-D-ribose 1-diphosphate biosynthesis; 5-phospho-alpha-D-ribose 1-diphosphate from D-ribose 5-phosphate (route I): step 1/1. Its function is as follows. Involved in the biosynthesis of the central metabolite phospho-alpha-D-ribosyl-1-pyrophosphate (PRPP) via the transfer of pyrophosphoryl group from ATP to 1-hydroxyl of ribose-5-phosphate (Rib-5-P). The polypeptide is Ribose-phosphate pyrophosphokinase (Listeria ivanovii).